A 934-amino-acid polypeptide reads, in one-letter code: 3-hydroxy-3-methylglutaryl-coenzyme A reductase (934 aa).

Residues 1-111 (MFYHGASANQ…VLNLVRGAET (111 aa)) lie on the Lumenal side of the membrane. Residues 112-132 (FDIALVTCAYIAMFYTLFNLF) form a helical membrane-spanning segment. Residues 113 to 280 (DIALVTCAYI…STFLSAILSL (168 aa)) form the SSD domain. Residues 133 to 141 (ARMRAVGSK) lie on the Cytoplasmic side of the membrane. Residues 142 to 162 (VWLGLSTLVSSFFAFLFALYI) form a helical membrane-spanning segment. Over 163–168 (TTRVLD) the chain is Lumenal. The helical transmembrane segment at 169 to 189 (LSIPFLSLSEGIPFFVAVVGF) threads the bilayer. At 190–231 (NNKILLAEKVLQNQLNAQSSKNDAPTVLYQALREQGPLLLRD) the chain is on the cytoplasmic side. Residues 232–252 (HLFMITAFLGCSFYASYLDGL) traverse the membrane as a helical segment. Over 253 to 256 (KNFC) the chain is Lumenal. A helical membrane pass occupies residues 257–277 (ILAALILAFDILTTSTFLSAI). Over 278–334 (LSLKLEINQIHRSTLLREQLEDDGLTETTVDDVLKSNSLAGTKTFTDAPSTLVTVAK) the chain is Cytoplasmic. Residues 335 to 355 (VAGVSVFFGLHFYGFGSAWLS) traverse the membrane as a helical segment. Residues 356 to 421 (DLSAGNETND…GLISTAARDK (66 aa)) are Lumenal-facing. 3 N-linked (GlcNAc...) asparagine glycosylation sites follow: Asn361, Asn364, and Asn382. The helical transmembrane segment at 422–442 (YISKFILFAFAVSASINVYLL) threads the bilayer. Topologically, residues 443-934 (NVARIHTTRL…MQHNRAAAKK (492 aa)) are cytoplasmic. The active-site Charge relay system is Glu618. 624–630 (SAMRGCK) is a CoA binding site. Residues 685–687 (SRF) and 712–720 (DAMGMNMIS) contribute to the NADP(+) site. Residue Lys752 is the Charge relay system of the active site. 781–783 (VLK) is a binding site for CoA. The Charge relay system role is filled by Asp828. Residue 923-924 (SH) participates in CoA binding. His924 (proton donor) is an active-site residue. 928-929 (NR) provides a ligand contact to NADP(+).

This sequence belongs to the HMG-CoA reductase family.

It localises to the endoplasmic reticulum membrane. It carries out the reaction (R)-mevalonate + 2 NADP(+) + CoA = (3S)-3-hydroxy-3-methylglutaryl-CoA + 2 NADPH + 2 H(+). It participates in metabolic intermediate biosynthesis; (R)-mevalonate biosynthesis; (R)-mevalonate from acetyl-CoA: step 3/3. Its function is as follows. HMG-CoA reductase; part of the first module of ergosterol biosynthesis pathway that includes the early steps of the pathway, conserved across all eukaryotes, and which results in the formation of mevalonate from acetyl-coenzyme A (acetyl-CoA). In this module, the cytosolic acetyl-CoA acetyltransferase catalyzes the formation of acetoacetyl-CoA. The hydroxymethylglutaryl-CoA synthase then condenses acetyl-CoA with acetoacetyl-CoA to form HMG-CoA. The rate-limiting step of the early module is the reduction to mevalonate by the 3-hydroxy-3-methylglutaryl-coenzyme A (HMG-CoA) reductase. The chain is 3-hydroxy-3-methylglutaryl-coenzyme A reductase from Cyberlindnera jadinii (Torula yeast).